Consider the following 323-residue polypeptide: SURF1-like protein (323 aa).

Positions 57–71 (DAPKSRENREKDGGK) are enriched in basic and acidic residues. Positions 57–76 (DAPKSRENREKDGGKSKKSK) are disordered. 2 helical membrane-spanning segments follow: residues 81–101 (WSTGSVLMLTIPVFAFSLGIW) and 299–319 (HLNYLTTWFTLTLVTMLMWIH).

This sequence belongs to the SURF1 family.

The protein localises to the mitochondrion inner membrane. In terms of biological role, probably involved in the biogenesis of the COX complex. In Caenorhabditis elegans, this protein is SURF1-like protein (sft-1).